We begin with the raw amino-acid sequence, 94 residues long: Large ribosomal subunit protein uL23 (94 aa).

It belongs to the universal ribosomal protein uL23 family. Part of the 50S ribosomal subunit. Contacts protein L29, and trigger factor when it is bound to the ribosome.

One of the early assembly proteins it binds 23S rRNA. One of the proteins that surrounds the polypeptide exit tunnel on the outside of the ribosome. Forms the main docking site for trigger factor binding to the ribosome. The chain is Large ribosomal subunit protein uL23 from Symbiobacterium thermophilum (strain DSM 24528 / JCM 14929 / IAM 14863 / T).